The primary structure comprises 495 residues: Carbohydrate oxidase (495 aa).

Residues methionine 1–arginine 22 form the signal peptide. The FAD-binding PCMH-type domain occupies leucine 55–alanine 229. The segment at residues histidine 92–cysteine 154 is a cross-link (6-(S-cysteinyl)-8alpha-(pros-histidyl)-FAD (His-Cys)). 2 N-linked (GlcNAc...) asparagine glycosylation sites follow: asparagine 244 and asparagine 417.

The protein belongs to the oxygen-dependent FAD-linked oxidoreductase family. The cofactor is FAD. In terms of processing, the FAD cofactor is bound via a bicovalent 6-S-cysteinyl, 8alpha-N1-histidyl FAD linkage.

It is found in the secreted. It catalyses the reaction beta-D-glucose + O2 = D-glucono-1,5-lactone + H2O2. The enzyme catalyses D-galactose + O2 = D-galactono-1,5-lactone + H2O2. It carries out the reaction D-cellobiose + O2 = D-cellobiono-1,5-lactone + H2O2. The catalysed reaction is beta-lactose + O2 = lactobiono-1,5-lactone + H2O2. It catalyses the reaction D-maltose + O2 = D-maltobiono-1,5-lactone + H2O2. The enzyme catalyses D-xylose + O2 = D-xylono-1,5-lactone + H2O2. In terms of biological role, catalyzes the selective oxidation of C1 hydroxyl moieties on mono-, oligo- and polysaccharides with concomitant reduction of molecular oxygen to hydrogen peroxide. This results in the formation of the corresponding lactones, which typically undergo spontaneous hydrolysis. Carbohydrate oxidase is able to oxidize a variety of substrates including D-glucose, D-galactose, D-xylose, D-maltose, D-cellobiose, and lactose. In addition, among various oligosaccharides, the enzyme preferred tetrameric dextrins, indicating a favorable interaction of four linked glucose units with the substrate binding pocket. The sequence is that of Carbohydrate oxidase from Microdochium nivale (Pink snow mold).